The following is a 595-amino-acid chain: Potassium-transporting ATPase potassium-binding subunit (595 aa).

10 helical membrane passes run 9-29, 63-83, 135-155, 177-197, 285-305, 312-332, 412-432, 451-471, 516-536, and 560-580; these read ICGY…YMAA, TGYA…VYAL, GLTV…VALI, ILHI…GQGV, FLEM…FGVM, GWVI…VTVL, GLYG…LMIG, AIVI…AVML, LMLG…VLAI, and FVGL…IPAL.

This sequence belongs to the KdpA family. The system is composed of three essential subunits: KdpA, KdpB and KdpC.

Its subcellular location is the cell inner membrane. Functionally, part of the high-affinity ATP-driven potassium transport (or Kdp) system, which catalyzes the hydrolysis of ATP coupled with the electrogenic transport of potassium into the cytoplasm. This subunit binds the periplasmic potassium ions and delivers the ions to the membrane domain of KdpB through an intramembrane tunnel. In Methylococcus capsulatus (strain ATCC 33009 / NCIMB 11132 / Bath), this protein is Potassium-transporting ATPase potassium-binding subunit.